We begin with the raw amino-acid sequence, 562 residues long: Protoporphyrinogen oxidase 1, chloroplastic (562 aa).

Residues M1–C48 constitute a chloroplast transit peptide. Residues G88–G93, E115–A116, and G137–S140 each bind FAD. Residues T274–G302 are disordered. Basic and acidic residues predominate over residues I278–L293. FAD is bound by residues V323 and V536 to L538.

This sequence belongs to the protoporphyrinogen/coproporphyrinogen oxidase family. Protoporphyrinogen oxidase subfamily. FAD serves as cofactor.

It localises to the plastid. The protein resides in the chloroplast thylakoid membrane. It is found in the chloroplast inner membrane. The catalysed reaction is protoporphyrinogen IX + 3 O2 = protoporphyrin IX + 3 H2O2. Its pathway is porphyrin-containing compound metabolism; protoporphyrin-IX biosynthesis; protoporphyrin-IX from protoporphyrinogen-IX: step 1/1. The protein operates within porphyrin-containing compound metabolism; chlorophyll biosynthesis. In terms of biological role, catalyzes the 6-electron oxidation of protoporphyrinogen-IX to form protoporphyrin-IX. The sequence is that of Protoporphyrinogen oxidase 1, chloroplastic from Spinacia oleracea (Spinach).